The sequence spans 163 residues: MASDQDNSGLDAPGSQFHRPILQSMPDTRQQSFDEIYGPPENFLEIEVRNPRTHGMGRHMYTDYEILCRTNIPAFKLRQSSVRRRYSDFEYFRDILERESARVTIPPLPGKVFTNRFSDDVIEGRRAGLEKFLKIVVGHPLLQTGSKVLAAFVQDPNWDRNAW.

The segment at 1 to 20 (MASDQDNSGLDAPGSQFHRP) is disordered. In terms of domain architecture, PX spans 42–159 (NFLEIEVRNP…AAFVQDPNWD (118 aa)). Arg-85, Ser-87, Lys-111, Arg-116, and Arg-125 together coordinate a 1,2-diacyl-sn-glycero-3-phospho-(1D-myo-inositol-3-phosphate).

This sequence belongs to the sorting nexin family.

The protein resides in the cytoplasm. Its subcellular location is the golgi apparatus membrane. It localises to the prevacuolar compartment membrane. In terms of biological role, required for retention of late Golgi membrane proteins. Component of the retrieval machinery that functions by direct interaction with the cytosolic tails of certain TGN membrane proteins during the sorting/budding process at the prevacuolar compartment. Binds phosphatidylinositol 3-phosphate (PtdIns(P3)). This is Sorting nexin-3 (SNX3) from Gibberella zeae (strain ATCC MYA-4620 / CBS 123657 / FGSC 9075 / NRRL 31084 / PH-1) (Wheat head blight fungus).